The chain runs to 387 residues: UDP-N-acetylglucosamine--N-acetylmuramyl-(pentapeptide) pyrophosphoryl-undecaprenol N-acetylglucosamine transferase (387 aa).

UDP-N-acetyl-alpha-D-glucosamine-binding positions include 23–25 (TGG), N135, R174, S203, I261, 280–285 (ALTVSE), and Q306.

This sequence belongs to the glycosyltransferase 28 family. MurG subfamily.

It localises to the cell inner membrane. The catalysed reaction is di-trans,octa-cis-undecaprenyl diphospho-N-acetyl-alpha-D-muramoyl-L-alanyl-D-glutamyl-meso-2,6-diaminopimeloyl-D-alanyl-D-alanine + UDP-N-acetyl-alpha-D-glucosamine = di-trans,octa-cis-undecaprenyl diphospho-[N-acetyl-alpha-D-glucosaminyl-(1-&gt;4)]-N-acetyl-alpha-D-muramoyl-L-alanyl-D-glutamyl-meso-2,6-diaminopimeloyl-D-alanyl-D-alanine + UDP + H(+). It functions in the pathway cell wall biogenesis; peptidoglycan biosynthesis. In terms of biological role, cell wall formation. Catalyzes the transfer of a GlcNAc subunit on undecaprenyl-pyrophosphoryl-MurNAc-pentapeptide (lipid intermediate I) to form undecaprenyl-pyrophosphoryl-MurNAc-(pentapeptide)GlcNAc (lipid intermediate II). The polypeptide is UDP-N-acetylglucosamine--N-acetylmuramyl-(pentapeptide) pyrophosphoryl-undecaprenol N-acetylglucosamine transferase (Colwellia psychrerythraea (strain 34H / ATCC BAA-681) (Vibrio psychroerythus)).